Reading from the N-terminus, the 78-residue chain is Consomatin Te1 (78 aa).

A signal peptide spans 1 to 22; sequence MQTAYWMMVMMMVWITAPLSEG. Residues 23–56 constitute a propeptide that is removed on maturation; the sequence is GQLNDVIRGLVPDNLAPQLVLQSLDSRRHPHGIR. The cysteines at positions 63 and 68 are disulfide-linked. Trp-65 bears the D-tryptophan mark. Residues Pro-69, Pro-70, and Pro-72 each carry the 4-hydroxyproline modification. Residues 74–78 constitute a propeptide that is removed on maturation; it reads RRLGS.

This sequence belongs to the conotoxin C superfamily. Consomatin family. In terms of tissue distribution, expressed by the venom duct.

The protein resides in the secreted. In terms of biological role, moderately activates human somatostatin receptors (SSTR) with a preferential activation of SSTR1 and SSTR4. In vivo, does not cause behavioral changes in mice within a few minutes of intracranial injection, but causes a progressive loss of movement thereafter. Four to five hours after injection, mice recover, even with the highest dose tested. Shows antinociception and antihyperalgesia activities in two mouse models of acute pain, most probably by acting outside the central nervous system. This is Consomatin Te1 from Conus terebra (Sea snail).